The sequence spans 194 residues: Leucyl/phenylalanyl-tRNA--protein transferase (194 aa).

The protein belongs to the L/F-transferase family.

It is found in the cytoplasm. The enzyme catalyses N-terminal L-lysyl-[protein] + L-leucyl-tRNA(Leu) = N-terminal L-leucyl-L-lysyl-[protein] + tRNA(Leu) + H(+). It catalyses the reaction N-terminal L-arginyl-[protein] + L-leucyl-tRNA(Leu) = N-terminal L-leucyl-L-arginyl-[protein] + tRNA(Leu) + H(+). The catalysed reaction is L-phenylalanyl-tRNA(Phe) + an N-terminal L-alpha-aminoacyl-[protein] = an N-terminal L-phenylalanyl-L-alpha-aminoacyl-[protein] + tRNA(Phe). Its function is as follows. Functions in the N-end rule pathway of protein degradation where it conjugates Leu, Phe and, less efficiently, Met from aminoacyl-tRNAs to the N-termini of proteins containing an N-terminal arginine or lysine. The chain is Leucyl/phenylalanyl-tRNA--protein transferase from Chlorobaculum parvum (strain DSM 263 / NCIMB 8327) (Chlorobium vibrioforme subsp. thiosulfatophilum).